The sequence spans 337 residues: WRKY transcription factor 23 (337 aa).

Positions 100–160 (INPPATPNSS…KNNQKRQREA (61 aa)) are disordered. Low complexity predominate over residues 106–118 (PNSSSISSASSEA). Over residues 142 to 155 (HTKKQLKAKKNNQK) the composition is skewed to basic residues. A DNA-binding region (WRKY) is located at residues 168 to 233 (SEVDHLEDGY…YEGQHTHISP (66 aa)).

It belongs to the WRKY group II-c family.

The protein localises to the nucleus. Its function is as follows. Transcription factor. Interacts specifically with the W box (5'-(T)TGAC[CT]-3'), a frequently occurring elicitor-responsive cis-acting element. The protein is WRKY transcription factor 23 (WRKY23) of Arabidopsis thaliana (Mouse-ear cress).